A 1016-amino-acid chain; its full sequence is Protein kinase C-like 2 (1016 aa).

Residues 1 to 68 (MDMIDEAITE…LEKLKLRKNG (68 aa)) enclose the REM-1 1 domain. The tract at residues 68–101 (GVRKSNSEKPSVGIEKNPSFSTTKSAKSFSSTSS) is disordered. The segment covering 86–101 (SFSTTKSAKSFSSTSS) has biased composition (low complexity). One can recognise an REM-1 2 domain in the interval 111-188 (NYDTPLTISK…LKRYHDLHIE (78 aa)). The C2 domain maps to 195–307 (PSTESRGNLN…VEKQRRKKVE (113 aa)). Phorbol-ester/DAG-type zinc fingers lie at residues 405 to 453 (GHKF…VTKC) and 473 to 523 (PHHF…PDFC). A disordered region spans residues 543–602 (YKAQQHKQKSSHHKHHHHKKSKSSSSKHKENDKASVSITTTTTPSITPADPVPTSPKPLA). Residues 546–568 (QQHKQKSSHHKHHHHKKSKSSSS) are compositionally biased toward basic residues. The span at 579-590 (SITTTTTPSITP) shows a compositional bias: low complexity. A Protein kinase domain is found at 683–942 (FTFLSVLGKG…AEDVMTHPFF (260 aa)). ATP contacts are provided by residues 689-697 (LGKGNFGKV) and lysine 712. The Proton acceptor role is filled by aspartate 808. An AGC-kinase C-terminal domain is found at 943–1013 (SNINWDDIYH…SCEDDKPSTT (71 aa)). Threonine 984 bears the Phosphothreonine mark.

Belongs to the protein kinase superfamily. AGC Ser/Thr protein kinase family. PKC subfamily. As to quaternary structure, interacts with rho2.

The enzyme catalyses L-seryl-[protein] + ATP = O-phospho-L-seryl-[protein] + ADP + H(+). It carries out the reaction L-threonyl-[protein] + ATP = O-phospho-L-threonyl-[protein] + ADP + H(+). Involved in the control of the cell shape. Target of the inhibitor staurosporine. The protein is Protein kinase C-like 2 (pck2) of Schizosaccharomyces pombe (strain 972 / ATCC 24843) (Fission yeast).